The following is a 149-amino-acid chain: Calmodulin (149 aa).

A2 bears the N-acetylalanine mark. EF-hand domains lie at 8–43 (EQIAEFKEAFSLFDKDGDGTITTKELGTVMRSLGQN), 44–79 (PTEAELQDMINEVDTDGNGTIDFPEFLTMMARKMKE), 81–116 (DSEEEIREAFRVFDKDGNGFISAAELRHVMTNLGEK), and 117–149 (LTDEEVDEMIREADTDGDGQVNYEEFVGMMTSK). Ca(2+) contacts are provided by D21, D23, D25, T27, E32, D57, D59, N61, T63, E68, D94, D96, N98, and E105. K116 carries the post-translational modification N6,N6,N6-trimethyllysine. The Ca(2+) site is built by D130, D132, D134, Q136, and E141.

It belongs to the calmodulin family.

Its function is as follows. Calmodulin mediates the control of a large number of enzymes, ion channels and other proteins by Ca(2+). Among the enzymes to be stimulated by the calmodulin-Ca(2+) complex are a number of protein kinases and phosphatases. The polypeptide is Calmodulin (Suberites domuncula (Sponge)).